A 397-amino-acid chain; its full sequence is Elongation factor Tu (397 aa).

The tr-type G domain maps to 10 to 206; it reads KPHCNIGTIG…AVDTWIPDPQ (197 aa). The interval 19–26 is G1; that stretch reads GHVDHGKT. Residue 19–26 coordinates GTP; the sequence is GHVDHGKT. Thr26 is a binding site for Mg(2+). The segment at 61-65 is G2; that stretch reads GITIS. Residues 82 to 85 are G3; sequence DCPG. GTP-binding positions include 82–86 and 137–140; these read DCPGH and NKCD. The interval 137–140 is G4; it reads NKCD. Positions 175–177 are G5; that stretch reads SAL.

The protein belongs to the TRAFAC class translation factor GTPase superfamily. Classic translation factor GTPase family. EF-Tu/EF-1A subfamily. As to quaternary structure, monomer.

The protein resides in the cytoplasm. It carries out the reaction GTP + H2O = GDP + phosphate + H(+). In terms of biological role, GTP hydrolase that promotes the GTP-dependent binding of aminoacyl-tRNA to the A-site of ribosomes during protein biosynthesis. This is Elongation factor Tu from Lachnoclostridium phytofermentans (strain ATCC 700394 / DSM 18823 / ISDg) (Clostridium phytofermentans).